The chain runs to 686 residues: Forkhead box protein P1 (686 aa).

2 stretches are compositionally biased toward polar residues: residues 1–19 (MMQE…IQNG) and 279–292 (IINP…QLSV). Disordered stretches follow at residues 1–23 (MMQE…ASGG) and 279–306 (IINP…EEHS). Basic and acidic residues predominate over residues 295 to 306 (PKRESLSHEEHS). Residues 315 to 340 (GVCKWPGCEAVCEDFQSFLKHLNSEH) form a C2H2-type zinc finger. A leucine-zipper region spans residues 357–378 (VQQLELQLAKDKERLQAMMTHL). The segment at 391 to 395 (PLNLV) is CTBP1-binding. Residues 403 to 412 (TASEASPQSL) show a composition bias toward polar residues. The disordered stretch occupies residues 403–440 (TASEASPQSLPHTPTTPTAPITPVTQGPSVITTTSMHN). The span at 413-427 (PHTPTTPTAPITPVT) shows a compositional bias: low complexity. A compositionally biased stretch (polar residues) spans 428–439 (QGPSVITTTSMH). The fork-head DNA-binding region spans 474-564 (RPPFTYASLI…PQKISGNPSL (91 aa)). Positions 619–686 (MEHTNSNGSD…EDEPVNEDIE (68 aa)) are disordered. The segment covering 621–632 (HTNSNGSDSSPG) has biased composition (polar residues). A compositionally biased stretch (acidic residues) spans 676-686 (YEDEPVNEDIE).

It is found in the nucleus. In terms of biological role, transcriptional repressor. The sequence is that of Forkhead box protein P1 (FOXP1) from Gallus gallus (Chicken).